The sequence spans 539 residues: Gamma-2-syntrophin (539 aa).

In terms of domain architecture, PDZ spans 73–156; the sequence is TVTLRRQPVG…DVTITVEYLR (84 aa). The PH domain maps to 296–421; sequence QVVHMGWVNE…WEKAFQRATF (126 aa).

The protein belongs to the syntrophin family. In terms of assembly, interacts with the dystrophin protein DMD and related proteins DTNA and DTNB.

Its subcellular location is the cell membrane. It is found in the sarcolemma. The protein resides in the cytoplasm. The protein localises to the cytoskeleton. In terms of biological role, adapter protein that binds to and probably organizes the subcellular localization of a variety of proteins. May link various receptors to the actin cytoskeleton and the dystrophin glycoprotein complex. The sequence is that of Gamma-2-syntrophin (Sntg2) from Mus musculus (Mouse).